An 879-amino-acid chain; its full sequence is Alanine--tRNA ligase (879 aa).

Zn(2+) contacts are provided by H566, H570, C668, and H672.

This sequence belongs to the class-II aminoacyl-tRNA synthetase family. Zn(2+) serves as cofactor.

The protein resides in the cytoplasm. The enzyme catalyses tRNA(Ala) + L-alanine + ATP = L-alanyl-tRNA(Ala) + AMP + diphosphate. Catalyzes the attachment of alanine to tRNA(Ala) in a two-step reaction: alanine is first activated by ATP to form Ala-AMP and then transferred to the acceptor end of tRNA(Ala). Also edits incorrectly charged Ser-tRNA(Ala) and Gly-tRNA(Ala) via its editing domain. This is Alanine--tRNA ligase from Clostridium tetani (strain Massachusetts / E88).